We begin with the raw amino-acid sequence, 473 residues long: 3-isopropylmalate dehydratase large subunit (473 aa).

[4Fe-4S] cluster contacts are provided by Cys-351, Cys-414, and Cys-417.

The protein belongs to the aconitase/IPM isomerase family. LeuC type 1 subfamily. Heterodimer of LeuC and LeuD. It depends on [4Fe-4S] cluster as a cofactor.

The enzyme catalyses (2R,3S)-3-isopropylmalate = (2S)-2-isopropylmalate. It functions in the pathway amino-acid biosynthesis; L-leucine biosynthesis; L-leucine from 3-methyl-2-oxobutanoate: step 2/4. Catalyzes the isomerization between 2-isopropylmalate and 3-isopropylmalate, via the formation of 2-isopropylmaleate. This is 3-isopropylmalate dehydratase large subunit from Variovorax paradoxus (strain S110).